The sequence spans 65 residues: Small ribosomal subunit protein bS21 (65 aa).

This sequence belongs to the bacterial ribosomal protein bS21 family.

This chain is Small ribosomal subunit protein bS21, found in Geotalea daltonii (strain DSM 22248 / JCM 15807 / FRC-32) (Geobacter daltonii).